A 336-amino-acid chain; its full sequence is HTH-type transcriptional repressor PurR (336 aa).

One can recognise an HTH lacI-type domain in the interval 2–56 (ATIKDVAKLAGVSTTTVSHVINKTRFVAEDTSKAVWDAIQQLNYSPSAVARSLKV). The H-T-H motif DNA-binding region spans 4 to 23 (IKDVAKLAGVSTTTVSHVIN). Residues 48-56 (SAVARSLKV) mediate DNA binding. The hypoxanthine site is built by Tyr-73, Lys-188, Phe-219, and Asp-273.

Homodimer.

Its pathway is purine metabolism; purine nucleotide biosynthesis [regulation]. Functionally, is the main repressor of the genes involved in the de novo synthesis of purine nucleotides, regulating purB, purC, purEK, purF, purHD, purL, purMN and guaBA expression. PurR is allosterically activated to bind its cognate DNA by binding the purine corepressors, hypoxanthine or guanine, thereby effecting transcription repression. The polypeptide is HTH-type transcriptional repressor PurR (Actinobacillus pleuropneumoniae serotype 5b (strain L20)).